A 282-amino-acid chain; its full sequence is Aquaporin PIP-type (282 aa).

2 consecutive transmembrane segments (helical) span residues 39–61 (WRAA…ATVI) and 74–96 (GLLG…TAGI). The NPA 1 motif lies at 102–104 (NPA). The next 4 helical transmembrane spans lie at 116–138 (SLLR…VGLV), 159–181 (GYNK…YTVF), 201–223 (LPIG…TGIN), and 243–265 (HWIF…QYVL). Residues 223–225 (NPA) carry the NPA 2 motif.

The protein belongs to the MIP/aquaporin (TC 1.A.8) family. PIP (TC 1.A.8.11) subfamily.

It localises to the membrane. In terms of biological role, water-specific channel. The chain is Aquaporin PIP-type from Atriplex canescens (Fourwing saltbush).